We begin with the raw amino-acid sequence, 1420 residues long: ABC transporter G family member 32 (1420 aa).

One can recognise an ABC transporter 1 domain in the interval 135–408 (LRNIHVIGGK…FSSLGFTCPD (274 aa)). ATP is bound at residue 168-175 (GPPSSGKT). Positions 486-699 (ELLKINFAWQ…AQNAASVNEF (214 aa)) constitute an ABC transmembrane type-2 1 domain. The next 7 helical transmembrane spans lie at 504 to 524 (FIYV…MTVF), 544 to 564 (LYFS…MLVA), 585 to 605 (LPSW…WVAV), 623 to 643 (FLLY…MGSL), 648 to 668 (IVAN…GGFI), 674 to 694 (IPSW…QNAA), and 735 to 755 (IGVA…TLFL). In terms of domain architecture, ABC transporter 2 spans 818-1070 (LSFSNINYYV…ELIKYFESIE (253 aa)). ATP is bound at residue 863 to 870 (GVSGAGKT). The region spanning 1143 to 1357 (SQFVACLWKQ…TLYGLLVSQY (215 aa)) is the ABC transmembrane type-2 2 domain. The next 7 helical transmembrane spans lie at 1162–1182 (YTAV…TICW), 1202–1222 (YAAV…VVSI), 1235–1255 (MYSA…YVLA), 1277–1297 (FLWY…YGMM), 1307–1327 (VASI…GFMI), 1334–1354 (LWWR…GLLV), and 1392–1412 (VSAI…AFAI).

Belongs to the ABC transporter superfamily. ABCG family. PDR (TC 3.A.1.205) subfamily. In terms of tissue distribution, ubiquitous in aerial organs. Higher expression levels in young, expanding tissues than in older tissues. Detected in the epidermal layer.

The protein localises to the cell membrane. In terms of biological role, may be a general defense protein. Required for the formation of the cuticle layer of the cell wall. This Arabidopsis thaliana (Mouse-ear cress) protein is ABC transporter G family member 32.